The sequence spans 175 residues: Flagellar assembly factor FliW (175 aa).

The protein belongs to the FliW family. In terms of assembly, interacts with translational regulator CsrA and flagellin(s).

It is found in the cytoplasm. Functionally, acts as an anti-CsrA protein, binds CsrA and prevents it from repressing translation of its target genes, one of which is flagellin. Binds to flagellin and participates in the assembly of the flagellum. This chain is Flagellar assembly factor FliW, found in Bdellovibrio bacteriovorus (strain ATCC 15356 / DSM 50701 / NCIMB 9529 / HD100).